A 92-amino-acid chain; its full sequence is PqqA binding protein (92 aa).

The protein belongs to the PqqD family. Monomer. Interacts with PqqE.

Its pathway is cofactor biosynthesis; pyrroloquinoline quinone biosynthesis. In terms of biological role, functions as a PqqA binding protein and presents PqqA to PqqE, in the pyrroloquinoline quinone (PQQ) biosynthetic pathway. This Xanthomonas axonopodis pv. citri (strain 306) protein is PqqA binding protein.